Here is an 83-residue protein sequence, read N- to C-terminus: Large ribosomal subunit protein bL31B (83 aa).

Belongs to the bacterial ribosomal protein bL31 family. Type B subfamily. Part of the 50S ribosomal subunit.

Its function is as follows. Binds the 23S rRNA. The chain is Large ribosomal subunit protein bL31B from Lactobacillus delbrueckii subsp. bulgaricus (strain ATCC 11842 / DSM 20081 / BCRC 10696 / JCM 1002 / NBRC 13953 / NCIMB 11778 / NCTC 12712 / WDCM 00102 / Lb 14).